We begin with the raw amino-acid sequence, 127 residues long: Mediator of RNA polymerase II transcription subunit 31 (127 aa).

The protein belongs to the Mediator complex subunit 31 family. In terms of assembly, component of the Mediator complex.

The protein resides in the nucleus. Component of the Mediator complex, a coactivator involved in the regulated transcription of nearly all RNA polymerase II-dependent genes. Mediator functions as a bridge to convey information from gene-specific regulatory proteins to the basal RNA polymerase II transcription machinery. Mediator is recruited to promoters by direct interactions with regulatory proteins and serves as a scaffold for the assembly of a functional preinitiation complex with RNA polymerase II and the general transcription factors. In Eremothecium gossypii (strain ATCC 10895 / CBS 109.51 / FGSC 9923 / NRRL Y-1056) (Yeast), this protein is Mediator of RNA polymerase II transcription subunit 31 (SOH1).